We begin with the raw amino-acid sequence, 382 residues long: uncharacterized protein (382 aa).

This is an uncharacterized protein from Orgyia pseudotsugata multicapsid polyhedrosis virus (OpMNPV).